The following is a 1091-amino-acid chain: Rho GTPase-activating protein 7 (1091 aa).

The 68-residue stretch at 11 to 78 (LTQIEAKEAC…LNKCAVMKLE (68 aa)) folds into the SAM domain. 3 positions are modified to phosphoserine: Ser86, Ser89, and Ser129. Disordered regions lie at residues 120 to 181 (SPKQ…TTPR), 296 to 329 (RSVSNSTQTSSSSSQSETSSAVSTPSPVTRTRSL), 402 to 439 (RTGSFHGPGHLSLRRENSSDSPKELKRRNSSSSVSSRM), and 491 to 552 (SDEG…SGVG). Residues 130-143 (PDNSRLQSATSRES) show a composition bias toward polar residues. Composition is skewed to low complexity over residues 155–166 (SSIRSLSSTSSS) and 298–324 (VSNSTQTSSSSSQSETSSAVSTPSPVT). The tract at residues 274–447 (QLNCVEISAL…RMSIYDNVPG (174 aa)) is focal adhesion-targeting (FAT). Residue Ser321 is modified to Phosphoserine. Over residues 414 to 425 (LRRENSSDSPKE) the composition is skewed to basic and acidic residues. Residues 499–511 (ALDSVSPCPSSPK) are compositionally biased toward polar residues. Residues 513–525 (IHLDVDHDRRTPS) are compositionally biased toward basic and acidic residues. The segment covering 526–535 (DLDSTGNSLN) has biased composition (polar residues). The segment at 614 to 636 (KHGFSWAVPKFMKRIKVPDYKDR) is polybasic cluster (PBR). The 207-residue stretch at 641–847 (VPLTVNVQRS…HMIAECKKLF (207 aa)) folds into the Rho-GAP domain. Positions 877 to 1084 (SNDQPADYRH…RDSFSNQSTE (208 aa)) constitute an START domain.

In terms of assembly, interacts with EF1A1, facilitates EF1A1 distribution to the membrane periphery and ruffles upon growth factor stimulation and suppresses cell migration. Interacts with tensin TNS1 (via N-terminus); the interaction is decreased by phosphorylation of TNS1. Interacts with TNS3 and PTEN; in resting cells, interacts with TNS3 (via C2 tensin-type domain) but, following growth factor stimulation, TNS3 and PTEN are phosphorylated which leads to weakened interaction with TNS3 and enhanced interaction with PTEN. Interacts (via C-terminus) with tensin TNS4 (via SH2 domain); the interaction is independent of tyrosine phosphorylation of DLC1.

Its subcellular location is the cytoplasm. It localises to the cell junction. The protein localises to the focal adhesion. The protein resides in the membrane. Its function is as follows. Functions as a GTPase-activating protein for the small GTPases RHOA, RHOB, RHOC and CDC42, terminating their downstream signaling. This induces morphological changes and detachment through cytoskeletal reorganization, playing a critical role in biological processes such as cell migration and proliferation. Also functions in vivo as an activator of the phospholipase PLCD1. Active DLC1 increases cell migration velocity but reduces directionality. Required for growth factor-induced epithelial cell migration; in resting cells, interacts with TNS3 while PTEN interacts with the p85 regulatory subunit of the PI3K kinase complex but growth factor stimulation induces phosphorylation of TNS3 and PTEN, causing them to change their binding preference so that PTEN interacts with DLC1 and TNS3 interacts with p85. The PTEN-DLC1 complex translocates to the posterior of migrating cells to activate RHOA while the TNS3-p85 complex translocates to the leading edge of migrating cells to promote RAC1 activation. The polypeptide is Rho GTPase-activating protein 7 (Dlc1) (Rattus norvegicus (Rat)).